The chain runs to 314 residues: Ribosomal protein L11 methyltransferase (314 aa).

S-adenosyl-L-methionine is bound by residues Thr164, Gly185, Asp207, and Asn249.

This sequence belongs to the methyltransferase superfamily. PrmA family.

It is found in the cytoplasm. It catalyses the reaction L-lysyl-[protein] + 3 S-adenosyl-L-methionine = N(6),N(6),N(6)-trimethyl-L-lysyl-[protein] + 3 S-adenosyl-L-homocysteine + 3 H(+). Its function is as follows. Methylates ribosomal protein L11. The sequence is that of Ribosomal protein L11 methyltransferase from Clostridium beijerinckii (strain ATCC 51743 / NCIMB 8052) (Clostridium acetobutylicum).